The following is a 303-amino-acid chain: Taste receptor type 2 member 13 (303 aa).

The Extracellular portion of the chain corresponds to 1 to 7 (MESALPS). Residues 8-28 (IFTLVIIAEFIIGNLSNGFIV) form a helical membrane-spanning segment. At 29–55 (LINCIDWVSKRELSSVDKLLIILAISR) the chain is on the cytoplasmic side. Residues 56–76 (IGLIWEILVSWFLALHSLAIF) traverse the membrane as a helical segment. Topologically, residues 77-85 (VSGTGLRIM) are extracellular. The chain crosses the membrane as a helical span at residues 86–106 (IFSWIVSNHFNLWLATILSIF). Topologically, residues 107 to 128 (YLLKIASFSSPAFLYLKRRVNK) are cytoplasmic. Residues 129-149 (VILMILLGTLVFLFLNLIQIN) traverse the membrane as a helical segment. Over 150-184 (MLIKDWLDRYERNTTWNFSMSDFETFSVSVRFTMT) the chain is Extracellular. Asparagine 162 and asparagine 166 each carry an N-linked (GlcNAc...) asparagine glycan. A helical membrane pass occupies residues 185 to 205 (MFSLTPFTVAFISFLLLVFSL). At 206-232 (QKHLQKMQLNYKGHRDPRTKVHTNALK) the chain is on the cytoplasmic side. The helical transmembrane segment at 233–253 (IVISFLLLYASFFLSILISWI) threads the bilayer. The Extracellular portion of the chain corresponds to 254–261 (SELYQNTV). The helical transmembrane segment at 262-282 (IYMLCETIGAFYPSSHSFLLI) threads the bilayer. The Cytoplasmic portion of the chain corresponds to 283 to 303 (LGNAKLRQAFLLVAAKVWAKR).

This sequence belongs to the G-protein coupled receptor T2R family.

Its subcellular location is the membrane. In terms of biological role, receptor that may play a role in the perception of bitterness and is gustducin-linked. May play a role in sensing the chemical composition of the gastrointestinal content. The activity of this receptor may stimulate alpha gustducin, mediate PLC-beta-2 activation and lead to the gating of TRPM5. The chain is Taste receptor type 2 member 13 (TAS2R13) from Pan troglodytes (Chimpanzee).